The sequence spans 210 residues: Ribosomal RNA large subunit methyltransferase E (210 aa).

G61, W63, D81, D97, and D122 together coordinate S-adenosyl-L-methionine. Residue K162 is the Proton acceptor of the active site.

The protein belongs to the class I-like SAM-binding methyltransferase superfamily. RNA methyltransferase RlmE family.

It localises to the cytoplasm. The enzyme catalyses uridine(2552) in 23S rRNA + S-adenosyl-L-methionine = 2'-O-methyluridine(2552) in 23S rRNA + S-adenosyl-L-homocysteine + H(+). Its function is as follows. Specifically methylates the uridine in position 2552 of 23S rRNA at the 2'-O position of the ribose in the fully assembled 50S ribosomal subunit. This chain is Ribosomal RNA large subunit methyltransferase E, found in Xanthomonas oryzae pv. oryzae (strain MAFF 311018).